A 61-amino-acid chain; its full sequence is Adipokinetic prohormone type 2 (61 aa).

Residues 1-22 (MRQGCALTLMLLVVVCAALSAA) form the signal peptide. Gln-23 carries the pyrrolidone carboxylic acid modification. Trp-30 is modified (tryptophan amide).

Belongs to the AKH/HRTH/RPCH family. As to quaternary structure, adipokinetic hormone precursor-related peptide (APRP) can form three type of disulfide-bond dimers: p1 (alpha-alpha), p2 (alpha-beta), and p3 (beta-beta).

Its subcellular location is the secreted. Functionally, this hormone, released from cells in the corpora cardiaca, causes release of diglycerides from the fat body and stimulation of muscles to use these diglycerides as an energy source during energy-demanding processes. This chain is Adipokinetic prohormone type 2, found in Schistocerca nitens (Vagrant locust).